A 419-amino-acid chain; its full sequence is Serine hydroxymethyltransferase (419 aa).

(6S)-5,6,7,8-tetrahydrofolate-binding positions include leucine 121 and 125-127; that span reads GHL. Lysine 230 is modified (N6-(pyridoxal phosphate)lysine). 354–356 contacts (6S)-5,6,7,8-tetrahydrofolate; it reads SPF.

It belongs to the SHMT family. Homodimer. Requires pyridoxal 5'-phosphate as cofactor.

It is found in the cytoplasm. The catalysed reaction is (6R)-5,10-methylene-5,6,7,8-tetrahydrofolate + glycine + H2O = (6S)-5,6,7,8-tetrahydrofolate + L-serine. The protein operates within one-carbon metabolism; tetrahydrofolate interconversion. Its pathway is amino-acid biosynthesis; glycine biosynthesis; glycine from L-serine: step 1/1. Its function is as follows. Catalyzes the reversible interconversion of serine and glycine with tetrahydrofolate (THF) serving as the one-carbon carrier. This reaction serves as the major source of one-carbon groups required for the biosynthesis of purines, thymidylate, methionine, and other important biomolecules. Also exhibits THF-independent aldolase activity toward beta-hydroxyamino acids, producing glycine and aldehydes, via a retro-aldol mechanism. This chain is Serine hydroxymethyltransferase, found in Prochlorococcus marinus (strain SARG / CCMP1375 / SS120).